Reading from the N-terminus, the 337-residue chain is MDPRSEVILRQQDYLKGRVLLINAPNDALVSQLPTEIDASVWTWNYADYQGFVNTGTPAHFSVEFPSQEFDQAIIFVPKSKELLNYILHVVMSHLKTDQSVFLVGEKKGGVERAAKQLQNFGTILKLDSARHCQLWHLKIEKIEKIKPLESWLKTYTVQVNGQELTICALPGVFSQTHLDVGTAVLLPYLNQVKSGRIADFGCGAGIISCYLAKANSSNIIHALDIDAFALQSTEMTFSRNGIGSDQLRLQPVTGIADAPTELDAIVSNPPFHQGIHTNYDASEGLCQNAKKHLKASGELWIVANRFLNYPILIEKHFGQCEIKTDLQGFKVLYACA.

It belongs to the methyltransferase superfamily. RsmC family. As to quaternary structure, monomer.

The protein localises to the cytoplasm. It catalyses the reaction guanosine(1207) in 16S rRNA + S-adenosyl-L-methionine = N(2)-methylguanosine(1207) in 16S rRNA + S-adenosyl-L-homocysteine + H(+). Functionally, specifically methylates the guanine in position 1207 of 16S rRNA in the 30S particle. The chain is Ribosomal RNA small subunit methyltransferase C from Acinetobacter baumannii (strain AB307-0294).